The primary structure comprises 161 residues: uncharacterized protein (161 aa).

A helical membrane pass occupies residues 76-94; the sequence is ISISSQCIFNVVILSFVFT.

It localises to the membrane. This is an uncharacterized protein from Saccharomyces cerevisiae (strain ATCC 204508 / S288c) (Baker's yeast).